The following is a 241-amino-acid chain: Pyrroloquinoline-quinone synthase (241 aa).

The protein belongs to the PqqC family.

It carries out the reaction 6-(2-amino-2-carboxyethyl)-7,8-dioxo-1,2,3,4,7,8-hexahydroquinoline-2,4-dicarboxylate + 3 O2 = pyrroloquinoline quinone + 2 H2O2 + 2 H2O + H(+). It participates in cofactor biosynthesis; pyrroloquinoline quinone biosynthesis. Ring cyclization and eight-electron oxidation of 3a-(2-amino-2-carboxyethyl)-4,5-dioxo-4,5,6,7,8,9-hexahydroquinoline-7,9-dicarboxylic-acid to PQQ. The sequence is that of Pyrroloquinoline-quinone synthase from Ruegeria pomeroyi (strain ATCC 700808 / DSM 15171 / DSS-3) (Silicibacter pomeroyi).